Reading from the N-terminus, the 368-residue chain is N-acetylneuraminate epimerase 2 (368 aa).

The N-terminal stretch at 1-19 (MNKTITALAILMASFAANA) is a signal peptide. Kelch repeat units follow at residues 40–84 (TVYI…AFID), 86–137 (NLYV…FVHN), 139–173 (KAYV…KINA), 174–219 (YYFD…VNKG), 222–265 (TWLI…VAGG), 287–336 (ENYQ…LWNN), and 338–367 (LLII…VTVQ). The active-site Proton acceptor is Glu228.

This sequence belongs to the NanM family. In terms of assembly, homodimer.

The protein resides in the periplasm. It catalyses the reaction N-acetyl-alpha-neuraminate = N-acetyl-beta-neuraminate. In terms of biological role, converts alpha-N-acetylneuranimic acid (Neu5Ac) to the beta-anomer, accelerating the equilibrium between the alpha- and beta-anomers. Probably facilitates sialidase-negative bacteria to compete successfully for limited amounts of extracellular Neu5Ac, which is likely taken up in the beta-anomer. In addition, the rapid removal of sialic acid from solution might be advantageous to the bacterium to damp down host responses. The chain is N-acetylneuraminate epimerase 2 from Escherichia coli O6:H1 (strain CFT073 / ATCC 700928 / UPEC).